A 141-amino-acid polypeptide reads, in one-letter code: Nucleoside triphosphatase NudI (141 aa).

The region spanning 1–141 is the Nudix hydrolase domain; that stretch reads MRQRTIVCPL…RHTLALKGLL (141 aa). The Nudix box motif lies at 38–59; it reads GGVEPGERIEEALRREVREELG.

Belongs to the Nudix hydrolase family. NudI subfamily. As to quaternary structure, monomer. Mg(2+) is required as a cofactor.

It carries out the reaction a ribonucleoside 5'-triphosphate + H2O = a ribonucleoside 5'-phosphate + diphosphate + H(+). The catalysed reaction is a 2'-deoxyribonucleoside 5'-triphosphate + H2O = a 2'-deoxyribonucleoside 5'-phosphate + diphosphate + H(+). It catalyses the reaction dUTP + H2O = dUMP + diphosphate + H(+). The enzyme catalyses dTTP + H2O = dTMP + diphosphate + H(+). It carries out the reaction dCTP + H2O = dCMP + diphosphate + H(+). Its function is as follows. Catalyzes the hydrolysis of nucleoside triphosphates, with a preference for pyrimidine deoxynucleoside triphosphates (dUTP, dTTP and dCTP). The chain is Nucleoside triphosphatase NudI from Salmonella schwarzengrund (strain CVM19633).